The following is a 319-amino-acid chain: Mitochondrial fission regulator 1-like-A (319 aa).

The segment at 1 to 37 (MASLGAAAEPERNLFGKDEAEAYESPEGRRSGRKKRT) is disordered. Positions 9-30 (EPERNLFGKDEAEAYESPEGRR) are enriched in basic and acidic residues.

This sequence belongs to the MTFR1 family.

It localises to the mitochondrion outer membrane. In terms of biological role, mitochondrial protein required for adaptation of miochondrial dynamics to metabolic changes. Regulates mitochondrial morphology at steady state and mediates AMPK-dependent stress-induced mitochondrial fragmentation via the control of OPA1 levels. This chain is Mitochondrial fission regulator 1-like-A (mtfr1l-a), found in Xenopus laevis (African clawed frog).